An 88-amino-acid chain; its full sequence is EMBRYO SURROUNDING FACTOR 1-like protein 7 (88 aa).

The N-terminal stretch at 1 to 22 (MKSSHIALICIVMFSLFALHES) is a signal peptide. Cystine bridges form between C41–C57, C46–C85, C55–C81, and C58–C68.

This sequence belongs to the MEG family. Expressed in leaves and flowers.

The polypeptide is EMBRYO SURROUNDING FACTOR 1-like protein 7 (ESFL7) (Arabidopsis thaliana (Mouse-ear cress)).